An 88-amino-acid polypeptide reads, in one-letter code: Large ribosomal subunit protein bL27 (88 aa).

Residues Met1 to Lys24 form a disordered region.

It belongs to the bacterial ribosomal protein bL27 family.

The protein is Large ribosomal subunit protein bL27 of Syntrophobacter fumaroxidans (strain DSM 10017 / MPOB).